Here is a 156-residue protein sequence, read N- to C-terminus: Ribosomal RNA large subunit methyltransferase H (156 aa).

S-adenosyl-L-methionine is bound by residues Leu-73, Gly-104, and 123–128; that span reads LSALTM.

This sequence belongs to the RNA methyltransferase RlmH family. Homodimer.

The protein resides in the cytoplasm. The catalysed reaction is pseudouridine(1915) in 23S rRNA + S-adenosyl-L-methionine = N(3)-methylpseudouridine(1915) in 23S rRNA + S-adenosyl-L-homocysteine + H(+). Functionally, specifically methylates the pseudouridine at position 1915 (m3Psi1915) in 23S rRNA. The protein is Ribosomal RNA large subunit methyltransferase H of Tolumonas auensis (strain DSM 9187 / NBRC 110442 / TA 4).